Consider the following 980-residue polypeptide: MDDLEQAILLASDSPAAAAASPAVRAEALAYCARARDETPPSSLLHLCLYGLASSPHAHVHFWCLQTIHDALLLRRRLALPDDLALLRSSLLSLAVSSNAASPPFLRNKLAQLLALLVRFEYPHVYPSYFLDLIPPSPPLPGPTDMFARVLVSLDDDLLSQDYPRNAEEASDAGRVKDAMRAQCVPQIARHWHEAAVSLRAADPAVAAVALDAARRCISWIDVSLVANDVFVPLLFDIALSPGSVAPLAAAAVGCLSAVAAKRMDARAKVALLRSLMSAQKGFGSPDSGLKMAHLVTAYAVEALECYRKLGSSDADGAAALEMLEEVLPAVFAAAESGDDDEVDSGSVLEFLSGYVSTMKAPTEKQLGHLGQILEVVRMQMSYDPVYRGHLDVLDKIGKEEEDLMAEQRKDLIALFRSICRVAPGATQLFIRGLLVTALSSAEVSVEDVEVALTLFYRLGEIVGEEEIRTGAGLIRELVPMLLSARFSCHTHRLVALVYLDTISRYIKFMQENDQYVPHLLTVFLDERGIHHQNAHVSCHAGYLLMRAIRLLKAKLVPYLDTILQSLQDALVQFTATDWANKDIKFSSSEDGSQIFEAVGLLIGIEEVSPDKQVQCLTALLNPLCQQIESLVMDAKAQGLEESSPRAIGLQQIIVALTMISKGFNERLVMGSRPTLGVMFKKTLDVVLQVLISFPNVKPLRSKIISFLHRMVEILGISVLPCIPIALRQLLVDNEAKDMSEFLYLINQIICKFKSSANALLEDVFPAIASHLSVILSHDAFSNGFASNTEEMRELQELEKRFYAFLLHIATHDLSTVLLTPSCRHYLENIMQLLLITSCSHKEISHRKTCVQTFVNLIKDWCSSSEIEDKLPGFRVFMIEKFATGCCLQSVLDKSFNFRDGISIALFGEIMMAQKVMYERFGENFVVNFVTKLREAHCPPDLAEQYYQKLQGNDIKAFKSFYESLVMKIRQQQNGSLVFR.

Belongs to the exportin family. As to expression, expressed in roots, stems, leaves, flowers and embryos.

It localises to the nucleus. The protein resides in the cytoplasm. Its function is as follows. Probable tRNA nucleus export receptor which regulates tRNA processing and facilitates tRNA translocation across the nuclear pore complex. Is required for correct leaf initiation at different developmental stages and may play a role in floral patterning. This chain is Exportin-T, found in Oryza sativa subsp. japonica (Rice).